Consider the following 371-residue polypeptide: ADP-ribosylarginine hydrolase Tri1 (371 aa).

Positions 1-61 (MIDLRSPNAL…LQSRACTLTP (61 aa)) are N-terminal extension. Positions 70-362 (GALLGLAIGD…LFDRAPQVDE (293 aa)) are ADP-ribosyl hydrolase domain. Residues threonine 112, aspartate 113, aspartate 114, aspartate 157, and aspartate 313 each contribute to the Mg(2+) site.

Belongs to the ADP-ribosylglycohydrolase family. Mg(2+) serves as cofactor.

It carries out the reaction N(omega)-(ADP-D-ribosyl)-L-arginyl-[protein] + H2O = ADP-D-ribose + L-arginyl-[protein]. Its function is as follows. Immunity component of an interbacterial competition system (also called effector-immunity systems). Expression in E.coli neutralizes the toxic effects of non-cognate S.proteamaculans effector protein Tre1 (Tre1-Sp); cannot be co-purified with Tre1-Sp from E.coli, suggesting they do not form a stable complex. Probably acts as an arginine mono-ADP-ribosylhydrolase, mediating the removal of mono-ADP-ribose attached to arginine residues on proteins. Probably de-ADP-ribosylates FtsZ and possibly other proteins; the ability to hydrolyze ADP-ribosyl moieties is not essential for neutralization of its cognate toxin, strongly suggesting its N-terminal extension occludes the active site of cognate toxin Tre1. The chain is ADP-ribosylarginine hydrolase Tri1 from Pseudomonas putida (strain GB-1).